The sequence spans 220 residues: Ribonuclease HII (220 aa).

The region spanning 1 to 210 (MKVAGVDEAG…ARKIEERFRK (210 aa)) is the RNase H type-2 domain. Asp-7, Glu-8, and Asp-105 together coordinate a divalent metal cation.

The protein belongs to the RNase HII family. It depends on Mn(2+) as a cofactor. Mg(2+) is required as a cofactor.

It is found in the cytoplasm. It catalyses the reaction Endonucleolytic cleavage to 5'-phosphomonoester.. In terms of biological role, endonuclease that specifically degrades the RNA of RNA-DNA hybrids. This Pyrococcus horikoshii (strain ATCC 700860 / DSM 12428 / JCM 9974 / NBRC 100139 / OT-3) protein is Ribonuclease HII (rnhB).